A 149-amino-acid chain; its full sequence is D-aminoacyl-tRNA deacylase (149 aa).

The Gly-cisPro motif, important for rejection of L-amino acids signature appears at 137–138 (GP).

It belongs to the DTD family. In terms of assembly, homodimer.

It localises to the cytoplasm. It catalyses the reaction glycyl-tRNA(Ala) + H2O = tRNA(Ala) + glycine + H(+). It carries out the reaction a D-aminoacyl-tRNA + H2O = a tRNA + a D-alpha-amino acid + H(+). In terms of biological role, an aminoacyl-tRNA editing enzyme that deacylates mischarged D-aminoacyl-tRNAs. Also deacylates mischarged glycyl-tRNA(Ala), protecting cells against glycine mischarging by AlaRS. Acts via tRNA-based rather than protein-based catalysis; rejects L-amino acids rather than detecting D-amino acids in the active site. By recycling D-aminoacyl-tRNA to D-amino acids and free tRNA molecules, this enzyme counteracts the toxicity associated with the formation of D-aminoacyl-tRNA entities in vivo and helps enforce protein L-homochirality. This is D-aminoacyl-tRNA deacylase from Fervidobacterium nodosum (strain ATCC 35602 / DSM 5306 / Rt17-B1).